The following is a 254-amino-acid chain: Imidazole glycerol phosphate synthase subunit HisF (254 aa).

Active-site residues include Asp-11 and Asp-130.

This sequence belongs to the HisA/HisF family. Heterodimer of HisH and HisF.

The protein localises to the cytoplasm. The catalysed reaction is 5-[(5-phospho-1-deoxy-D-ribulos-1-ylimino)methylamino]-1-(5-phospho-beta-D-ribosyl)imidazole-4-carboxamide + L-glutamine = D-erythro-1-(imidazol-4-yl)glycerol 3-phosphate + 5-amino-1-(5-phospho-beta-D-ribosyl)imidazole-4-carboxamide + L-glutamate + H(+). It participates in amino-acid biosynthesis; L-histidine biosynthesis; L-histidine from 5-phospho-alpha-D-ribose 1-diphosphate: step 5/9. IGPS catalyzes the conversion of PRFAR and glutamine to IGP, AICAR and glutamate. The HisF subunit catalyzes the cyclization activity that produces IGP and AICAR from PRFAR using the ammonia provided by the HisH subunit. The protein is Imidazole glycerol phosphate synthase subunit HisF of Trichlorobacter lovleyi (strain ATCC BAA-1151 / DSM 17278 / SZ) (Geobacter lovleyi).